The primary structure comprises 438 residues: Transposon Ty2-OR2 Gag polyprotein (438 aa).

Disordered stretches follow at residues 1-88 (MESQ…YQQH), 365-397 (NVSR…AKAH), and 419-438 (SSQY…TERI). Composition is skewed to polar residues over residues 19–39 (ASVT…SASN) and 49–60 (KVNSQEETTPGT). An RNA-binding region spans residues 295–397 (ENNINVSDRL…SSKPRAAKAH (103 aa)). Over residues 369–381 (TSPNTTNTKVTTR) the composition is skewed to low complexity.

As to quaternary structure, homotrimer.

The protein resides in the cytoplasm. In terms of biological role, capsid protein (CA) is the structural component of the virus-like particle (VLP), forming the shell that encapsulates the retrotransposons dimeric RNA genome. The particles are assembled from trimer-clustered units and there are holes in the capsid shells that allow for the diffusion of macromolecules. CA also has nucleocapsid-like chaperone activity, promoting primer tRNA(i)-Met annealing to the multipartite primer-binding site (PBS), dimerization of Ty2 RNA and initiation of reverse transcription. This is Transposon Ty2-OR2 Gag polyprotein (TY2A-OR2) from Saccharomyces cerevisiae (strain ATCC 204508 / S288c) (Baker's yeast).